We begin with the raw amino-acid sequence, 244 residues long: Flavin-dependent thymidylate synthase (244 aa).

One can recognise a ThyX domain in the interval 2–207 (VRVTLVNYTR…ELRPIIKWAK (206 aa)). FAD is bound by residues Ser56, 80–82 (RHR), and Gln88. DUMP-binding positions include 77–80 (QLVR), 88–92 (QQSQR), and Arg146. The short motif at 80–90 (RHRIASYTQQS) is the ThyX motif element. Residues 162–164 (NLR) and His168 contribute to the FAD site. Arg173 contributes to the dUMP binding site. The active-site Involved in ionization of N3 of dUMP, leading to its activation is Arg173.

Belongs to the thymidylate synthase ThyX family. As to quaternary structure, homotetramer. The cofactor is FAD.

It catalyses the reaction dUMP + (6R)-5,10-methylene-5,6,7,8-tetrahydrofolate + NADPH + H(+) = dTMP + (6S)-5,6,7,8-tetrahydrofolate + NADP(+). It functions in the pathway pyrimidine metabolism; dTTP biosynthesis. Its function is as follows. Catalyzes the reductive methylation of 2'-deoxyuridine-5'-monophosphate (dUMP) to 2'-deoxythymidine-5'-monophosphate (dTMP) while utilizing 5,10-methylenetetrahydrofolate (mTHF) as the methyl donor, and NADPH and FADH(2) as the reductant. The chain is Flavin-dependent thymidylate synthase from Pyrococcus abyssi (strain GE5 / Orsay).